Consider the following 471-residue polypeptide: MAGSPSRAAGRRLQLPLLSFLQGATAVLFAVFVRYNHKTDAALWHRGNHSNADNEFYFRYPSFQDVHAMVFVGFGFLMVFLQRYGFSSVGFTFLLAAFALQWSTLVQGFLHSFHGGHIHVGVESMINADFCAGAVLISFGAVLGKTGPAQLLLMALLEVVLFGINEFVLLHLLGVRDAGGSMTIHTFGAYFGLVLSQVLYRPQLEKSKHRQGLYHSDLFAMIGTIFLWIFWPSFNAALTSLGAGQHRTALNTYYSLAASTLGTFALSALVGEDGRLDMVHIQNAALAGRVVVGTSSEMMLTPFGALAAGFLAGTVSTLGYKFFTPILESKFKVQDTCGVHNLHGMPGVLGVLLGVLVAGLATHEAYGDGLESVFPLIAEGQRSATSQAMYQLFGLFVTLMFASVGGGLGGLLLKLPFLDSPPDSQCYEDQVHWQAPGATLSPLPTPAFQVPGEHEDKAQRPLRVEEADTQA.

Over 1 to 13 (MAGSPSRAAGRRL) the chain is Cytoplasmic. The chain crosses the membrane as a helical span at residues 14 to 33 (QLPLLSFLQGATAVLFAVFV). Over 34–60 (RYNHKTDAALWHRGNHSNADNEFYFRY) the chain is Extracellular. An N-linked (GlcNAc...) asparagine glycan is attached at Asn48. A helical transmembrane segment spans residues 61 to 81 (PSFQDVHAMVFVGFGFLMVFL). The Cytoplasmic segment spans residues 82 to 85 (QRYG). Residues 86–106 (FSSVGFTFLLAAFALQWSTLV) form a helical membrane-spanning segment. The Extracellular segment spans residues 107 to 123 (QGFLHSFHGGHIHVGVE). The chain crosses the membrane as a helical span at residues 124 to 144 (SMINADFCAGAVLISFGAVLG). The Cytoplasmic segment spans residues 145–148 (KTGP). A helical membrane pass occupies residues 149 to 169 (AQLLLMALLEVVLFGINEFVL). Residues 170–177 (LHLLGVRD) lie on the Extracellular side of the membrane. A helical membrane pass occupies residues 178 to 200 (AGGSMTIHTFGAYFGLVLSQVLY). Residues 201 to 217 (RPQLEKSKHRQGLYHSD) are Cytoplasmic-facing. Residues 218–238 (LFAMIGTIFLWIFWPSFNAAL) form a helical membrane-spanning segment. At 239-249 (TSLGAGQHRTA) the chain is on the extracellular side. The chain crosses the membrane as a helical span at residues 250 to 270 (LNTYYSLAASTLGTFALSALV). Over 271-280 (GEDGRLDMVH) the chain is Cytoplasmic. The helical transmembrane segment at 281–301 (IQNAALAGRVVVGTSSEMMLT) threads the bilayer. Position 302 (Pro302) is a topological domain, extracellular. Residues 303–323 (FGALAAGFLAGTVSTLGYKFF) form a helical membrane-spanning segment. Over 324-344 (TPILESKFKVQDTCGVHNLHG) the chain is Cytoplasmic. The chain crosses the membrane as a helical span at residues 345–365 (MPGVLGVLLGVLVAGLATHEA). The Extracellular portion of the chain corresponds to 366 to 391 (YGDGLESVFPLIAEGQRSATSQAMYQ). The chain crosses the membrane as a helical span at residues 392-412 (LFGLFVTLMFASVGGGLGGLL). Over 413-471 (LKLPFLDSPPDSQCYEDQVHWQAPGATLSPLPTPAFQVPGEHEDKAQRPLRVEEADTQA) the chain is Cytoplasmic. The tract at residues 414-422 (KLPFLDSPP) is interaction with ANK3. A Basolateral sorting signal motif is present at residues 427–430 (YEDQ). Residues 437 to 471 (GATLSPLPTPAFQVPGEHEDKAQRPLRVEEADTQA) form a disordered region. Over residues 452–471 (GEHEDKAQRPLRVEEADTQA) the composition is skewed to basic and acidic residues.

This sequence belongs to the ammonium transporter (TC 2.A.49) family. Rh subfamily. In terms of assembly, interacts (via C-terminus) with ANK2 and ANK3; required for targeting to the basolateral membrane. N-glycosylated.

It localises to the cell membrane. The protein localises to the basolateral cell membrane. It carries out the reaction NH4(+)(in) = NH4(+)(out). The enzyme catalyses methylamine(out) = methylamine(in). It catalyses the reaction CO2(out) = CO2(in). Its function is as follows. Ammonium transporter involved in the maintenance of acid-base homeostasis. Transports ammonium and its related derivative methylammonium across the basolateral plasma membrane of epithelial cells likely contributing to renal transepithelial ammonia transport and ammonia metabolism. May transport either NH4(+) or NH3 ammonia species predominantly mediating an electrogenic NH4(+) transport. May act as a CO2 channel providing for renal acid secretion. In Pongo pygmaeus (Bornean orangutan), this protein is Ammonium transporter Rh type B (RHBG).